Reading from the N-terminus, the 40-residue chain is Photosystem II reaction center protein Psb30 (40 aa).

The chain crosses the membrane as a helical span at residues 12 to 32 (VIFQLTSVALIIIAGPAVIFV).

The protein belongs to the Psb30/Ycf12 family. In terms of assembly, PSII is composed of 1 copy each of membrane proteins PsbA, PsbB, PsbC, PsbD, PsbE, PsbF, PsbH, PsbI, PsbJ, PsbK, PsbL, PsbM, PsbT, PsbX, PsbY, PsbZ, Psb30/Ycf12, peripheral proteins PsbO, CyanoQ (PsbQ), PsbU, PsbV and a large number of cofactors. It forms dimeric complexes.

It is found in the cellular thylakoid membrane. A core subunit of photosystem II (PSII), probably helps stabilize the reaction center. This chain is Photosystem II reaction center protein Psb30, found in Nostoc sp. (strain PCC 7120 / SAG 25.82 / UTEX 2576).